The following is a 456-amino-acid chain: Glycerol-3-phosphate dehydrogenase [NAD(+)] At3g07690, cytosolic (456 aa).

NAD(+) contacts are provided by residues 41–46 (GAGAWG), Lys-189, and Ala-228. Substrate is bound at residue Lys-189. Lys-278 serves as the catalytic Proton acceptor. Arg-340 and Gln-368 together coordinate NAD(+). 340–341 (RN) is a substrate binding site.

It belongs to the NAD-dependent glycerol-3-phosphate dehydrogenase family. As to quaternary structure, homodimer.

The protein resides in the cytoplasm. The enzyme catalyses sn-glycerol 3-phosphate + NAD(+) = dihydroxyacetone phosphate + NADH + H(+). In terms of biological role, required for glycerol-3-phosphate (G3P) accumulation during systemic acquired resistance (SAR) establishment. In Arabidopsis thaliana (Mouse-ear cress), this protein is Glycerol-3-phosphate dehydrogenase [NAD(+)] At3g07690, cytosolic.